The sequence spans 67 residues: Large ribosomal subunit protein bL32 (67 aa).

Over residues 1–19 (MAVPKRKMSRANTRMRRSQ) the composition is skewed to basic residues. The interval 1–22 (MAVPKRKMSRANTRMRRSQWKA) is disordered.

The protein belongs to the bacterial ribosomal protein bL32 family.

The protein is Large ribosomal subunit protein bL32 of Kocuria rhizophila (strain ATCC 9341 / DSM 348 / NBRC 103217 / DC2201).